The chain runs to 886 residues: MSIKASGGSPLARPQLYRTASILTITQAEQQDRFLQLGELNQLVSFLNSGQKRLEVADILTKNANILVARAADKIFVGGSAISYLERPQAAVIIAGDQSSRDKINELSGNIQGDFGQSFRSLFNAGGATPPGFKPINVLRYGTTRMRKSLRDLDWFLRYLTYAIVSGDPNILSVNIRGLRELIDNACSSAAAIVALREMRRTALAIFEEDIKGQDLVREYFNVVISEFEAPSLTDKLRKRESTDLQGLRLPQTYSQAGVSTPRFVMKSSLSADEKNTVVKACYRQIFERDIAKTYDLSLSNLESQVKNGQISIKEFIRSLGTSNIYRKQFYEPFVNSRALELAFRHFLGRGPSSLEEFQKYFAILSATGLSGLVNAILNSAEYADYFGEETVPYFRKLGEEPQECRNWGPQIDLLNYSAPFRKVPQFITLFSDYKQSLPDQHPYGTGNDPLSIQFGAIFPKENKDPRKRQAIFGKDTRRILVRRGPGIYNQISNPQVRPKSAGSLGPKIFKLSNTLVATNSSANFENSVDVIAKVSYLRVFGREVYQEEKLLLRPIESQLQDGQISVREFIRQLAKSSIFRSLYWEPLYICKAIEYIHNRLLGRPTYGRQEINKYFDIAYKEGYYQVVDAIIDSPEYIETFGENVVPYERYTTPAGIALRSLRPGIIDQRFKKVISSKSSRFVELGKVKEIRSSNDIQSRIAQGVTALRDQSVIFDVNQNSSQEVLEQALRAAYRQIFERDLNSFSIGGEFLDIESSFLNKQINVKELIQKLALSELYGKEFYQPYPNTKVIELGTKHILGRAPNNQAEIRFLNQILASKGLSTFVETLVNSSEYDSVYGTNTVPYRRFPTLPAANFPNTETLYNRLTKQNVSVVVPSFKKVLGNQ.

Position 187 (Cys-187) interacts with (2R,3E)-phycocyanobilin. 3 consecutive PBS-linker domains span residues 244–424 (DLQG…FRKV), 496–678 (QVRP…ISSK), and 695–876 (NDIQ…SVVV).

This sequence belongs to the phycobilisome linker protein family. In terms of processing, contains one covalently linked bilin chromophore. This protein autochromophorylates (Potential).

It localises to the plastid. The protein resides in the chloroplast thylakoid membrane. Its function is as follows. This protein is postulated to act both as terminal energy acceptor and as a linker polypeptide that stabilizes the phycobilisome architecture. May have intrinsic bilin lyase activity. In Porphyra purpurea (Red seaweed), this protein is Phycobiliprotein ApcE (apcE).